We begin with the raw amino-acid sequence, 545 residues long: CTP synthase (545 aa).

The segment at 1–266 is amidoligase domain; the sequence is MTTNYIFVTG…DDYICKRFSL (266 aa). Ser-14 contacts CTP. Ser-14 contacts UTP. ATP-binding positions include 15–20 and Asp-72; that span reads SLGKGI. Positions 72 and 140 each coordinate Mg(2+). Residues 147 to 149, 187 to 192, and Lys-223 contribute to the CTP site; these read DIE and KTKPTQ. Residues 187-192 and Lys-223 contribute to the UTP site; that span reads KTKPTQ. 239–241 contacts ATP; sequence KDI. The 252-residue stretch at 291 to 542 folds into the Glutamine amidotransferase type-1 domain; it reads TIGMVGKYVA…VKAAGAYQKR (252 aa). An L-glutamine-binding site is contributed by Gly-352. Cys-379 functions as the Nucleophile; for glutamine hydrolysis in the catalytic mechanism. Residues 380–383, Glu-403, and Arg-470 contribute to the L-glutamine site; that span reads LGMQ. Residues His-515 and Glu-517 contribute to the active site.

It belongs to the CTP synthase family. In terms of assembly, homotetramer.

The enzyme catalyses UTP + L-glutamine + ATP + H2O = CTP + L-glutamate + ADP + phosphate + 2 H(+). The catalysed reaction is L-glutamine + H2O = L-glutamate + NH4(+). It catalyses the reaction UTP + NH4(+) + ATP = CTP + ADP + phosphate + 2 H(+). It participates in pyrimidine metabolism; CTP biosynthesis via de novo pathway; CTP from UDP: step 2/2. With respect to regulation, allosterically activated by GTP, when glutamine is the substrate; GTP has no effect on the reaction when ammonia is the substrate. The allosteric effector GTP functions by stabilizing the protein conformation that binds the tetrahedral intermediate(s) formed during glutamine hydrolysis. Inhibited by the product CTP, via allosteric rather than competitive inhibition. Functionally, catalyzes the ATP-dependent amination of UTP to CTP with either L-glutamine or ammonia as the source of nitrogen. Regulates intracellular CTP levels through interactions with the four ribonucleotide triphosphates. This Pectobacterium atrosepticum (strain SCRI 1043 / ATCC BAA-672) (Erwinia carotovora subsp. atroseptica) protein is CTP synthase.